The chain runs to 346 residues: N-acetyl-gamma-glutamyl-phosphate reductase (346 aa).

Residue cysteine 149 is part of the active site.

This sequence belongs to the NAGSA dehydrogenase family. Type 1 subfamily.

The protein resides in the cytoplasm. It carries out the reaction N-acetyl-L-glutamate 5-semialdehyde + phosphate + NADP(+) = N-acetyl-L-glutamyl 5-phosphate + NADPH + H(+). The protein operates within amino-acid biosynthesis; L-arginine biosynthesis; N(2)-acetyl-L-ornithine from L-glutamate: step 3/4. Functionally, catalyzes the NADPH-dependent reduction of N-acetyl-5-glutamyl phosphate to yield N-acetyl-L-glutamate 5-semialdehyde. In Citrifermentans bemidjiense (strain ATCC BAA-1014 / DSM 16622 / JCM 12645 / Bem) (Geobacter bemidjiensis), this protein is N-acetyl-gamma-glutamyl-phosphate reductase.